We begin with the raw amino-acid sequence, 169 residues long: ATP synthase subunit b (169 aa).

A helical membrane pass occupies residues 3–23 (IKILLLVLPFFAFASEHGGVN).

The protein belongs to the ATPase B chain family. F-type ATPases have 2 components, F(1) - the catalytic core - and F(0) - the membrane proton channel. F(1) has five subunits: alpha(3), beta(3), gamma(1), delta(1), epsilon(1). F(0) has three main subunits: a(1), b(2) and c(10-14). The alpha and beta chains form an alternating ring which encloses part of the gamma chain. F(1) is attached to F(0) by a central stalk formed by the gamma and epsilon chains, while a peripheral stalk is formed by the delta and b chains.

It localises to the cell inner membrane. F(1)F(0) ATP synthase produces ATP from ADP in the presence of a proton or sodium gradient. F-type ATPases consist of two structural domains, F(1) containing the extramembraneous catalytic core and F(0) containing the membrane proton channel, linked together by a central stalk and a peripheral stalk. During catalysis, ATP synthesis in the catalytic domain of F(1) is coupled via a rotary mechanism of the central stalk subunits to proton translocation. Its function is as follows. Component of the F(0) channel, it forms part of the peripheral stalk, linking F(1) to F(0). The sequence is that of ATP synthase subunit b from Campylobacter curvus (strain 525.92).